A 420-amino-acid chain; its full sequence is 3-phosphoshikimate 1-carboxyvinyltransferase (420 aa).

The 3-phosphoshikimate site is built by K26, S27, and R31. K26 contacts phosphoenolpyruvate. Phosphoenolpyruvate contacts are provided by G97 and R125. 3-phosphoshikimate-binding residues include S170, S171, Q172, D297, N320, and K324. Phosphoenolpyruvate is bound at residue Q172. D297 (proton acceptor) is an active-site residue. Residues R328, R375, and K400 each coordinate phosphoenolpyruvate.

It belongs to the EPSP synthase family. As to quaternary structure, monomer.

It localises to the cytoplasm. It carries out the reaction 3-phosphoshikimate + phosphoenolpyruvate = 5-O-(1-carboxyvinyl)-3-phosphoshikimate + phosphate. It participates in metabolic intermediate biosynthesis; chorismate biosynthesis; chorismate from D-erythrose 4-phosphate and phosphoenolpyruvate: step 6/7. In terms of biological role, catalyzes the transfer of the enolpyruvyl moiety of phosphoenolpyruvate (PEP) to the 5-hydroxyl of shikimate-3-phosphate (S3P) to produce enolpyruvyl shikimate-3-phosphate and inorganic phosphate. The sequence is that of 3-phosphoshikimate 1-carboxyvinyltransferase from Rhizobium etli (strain ATCC 51251 / DSM 11541 / JCM 21823 / NBRC 15573 / CFN 42).